A 113-amino-acid polypeptide reads, in one-letter code: uncharacterized protein (113 aa).

The protein to H.pylori HP0245/JHP0230.

This is an uncharacterized protein from Campylobacter jejuni subsp. jejuni serotype O:2 (strain ATCC 700819 / NCTC 11168).